The chain runs to 467 residues: 3-isopropylmalate dehydratase large subunit (467 aa).

Residues cysteine 349, cysteine 409, and cysteine 412 each contribute to the [4Fe-4S] cluster site.

This sequence belongs to the aconitase/IPM isomerase family. LeuC type 1 subfamily. In terms of assembly, heterodimer of LeuC and LeuD. [4Fe-4S] cluster is required as a cofactor.

The catalysed reaction is (2R,3S)-3-isopropylmalate = (2S)-2-isopropylmalate. It functions in the pathway amino-acid biosynthesis; L-leucine biosynthesis; L-leucine from 3-methyl-2-oxobutanoate: step 2/4. In terms of biological role, catalyzes the isomerization between 2-isopropylmalate and 3-isopropylmalate, via the formation of 2-isopropylmaleate. The chain is 3-isopropylmalate dehydratase large subunit from Ruegeria sp. (strain TM1040) (Silicibacter sp.).